Reading from the N-terminus, the 301-residue chain is Ornithine carbamoyltransferase (301 aa).

Residues Arg100 and 127–130 contribute to the carbamoyl phosphate site; that span reads HPCQ. L-ornithine is bound by residues Asn158, Asp221, and 225-226; that span reads SM. Carbamoyl phosphate is bound by residues 260–261 and Arg288; that span reads CL.

This sequence belongs to the aspartate/ornithine carbamoyltransferase superfamily. OTCase family.

The protein resides in the cytoplasm. It carries out the reaction carbamoyl phosphate + L-ornithine = L-citrulline + phosphate + H(+). It participates in amino-acid biosynthesis; L-arginine biosynthesis; L-arginine from L-ornithine and carbamoyl phosphate: step 1/3. Functionally, reversibly catalyzes the transfer of the carbamoyl group from carbamoyl phosphate (CP) to the N(epsilon) atom of ornithine (ORN) to produce L-citrulline. This Shewanella oneidensis (strain ATCC 700550 / JCM 31522 / CIP 106686 / LMG 19005 / NCIMB 14063 / MR-1) protein is Ornithine carbamoyltransferase.